Reading from the N-terminus, the 118-residue chain is V-type proton ATPase subunit G 1 (118 aa).

Ala-2 carries the post-translational modification N-acetylalanine.

It belongs to the V-ATPase G subunit family. As to quaternary structure, V-ATPase is a heteromultimeric enzyme made up of two complexes: the ATP-hydrolytic V1 complex and the proton translocation V0 complex. The V1 complex consists of three catalytic AB heterodimers that form a heterohexamer, three peripheral stalks each consisting of EG heterodimers, one central rotor including subunits D and F, and the regulatory subunits C and H. The proton translocation complex V0 consists of the proton transport subunit a, a ring of proteolipid subunits c9c'', rotary subunit d, subunits e and f, and the accessory subunits ATP6AP1/Ac45 and ATP6AP2/PRR. As to expression, kidney; localizes to early distal nephron, encompassing thick ascending limbs and distal convoluted tubules (at protein level). Ubiquitous.

Its subcellular location is the apical cell membrane. In terms of biological role, subunit of the V1 complex of vacuolar(H+)-ATPase (V-ATPase), a multisubunit enzyme composed of a peripheral complex (V1) that hydrolyzes ATP and a membrane integral complex (V0) that translocates protons. V-ATPase is responsible for acidifying and maintaining the pH of intracellular compartments and in some cell types, is targeted to the plasma membrane, where it is responsible for acidifying the extracellular environment. In aerobic conditions, involved in intracellular iron homeostasis, thus triggering the activity of Fe(2+) prolyl hydroxylase (PHD) enzymes, and leading to HIF1A hydroxylation and subsequent proteasomal degradation. In Mus musculus (Mouse), this protein is V-type proton ATPase subunit G 1 (Atp6v1g1).